Here is a 174-residue protein sequence, read N- to C-terminus: Male-enhanced antigen 1 (174 aa).

Disordered regions lie at residues M1–A83 and H95–D123. 3 stretches are compositionally biased toward acidic residues: residues S38–E48, P65–A82, and L101–G110. Residue S103 is modified to Phosphoserine.

In terms of tissue distribution, highly expressed in testis. Transcripts can be found in primary and secondary spermatocytes, and spermatids, but the protein itself is only detected in spermatids. No expression in Leydig cells, spermatogonia, or sperm. Very weak expression in the heart, kidney, spleen, thymus and ovary.

May play an important role in spermatogenesis and/or testis development. This is Male-enhanced antigen 1 (Mea1) from Mus musculus (Mouse).